The chain runs to 555 residues: CTP synthase (555 aa).

Residues 1–267 form an amidoligase domain region; the sequence is MAKFVFVTGG…CKEVLDCLDL (267 aa). A CTP-binding site is contributed by Ser-13. Ser-13 lines the UTP pocket. ATP contacts are provided by residues 14-19 and Asp-71; that span reads SIGKGI. Residues Asp-71 and Glu-141 each contribute to the Mg(2+) site. Residues 148-150, 188-193, and Lys-224 contribute to the CTP site; these read DIE and KTKPTQ. Residues 188–193 and Lys-224 contribute to the UTP site; that span reads KTKPTQ. Positions 292-534 constitute a Glutamine amidotransferase type-1 domain; it reads KVALVGKYVQ…IQAAQIRVPS (243 aa). Gly-354 is a binding site for L-glutamine. The active-site Nucleophile; for glutamine hydrolysis is Cys-381. Residues 382–385, Glu-405, and Arg-462 each bind L-glutamine; that span reads LGMQ. Residues His-507 and Glu-509 contribute to the active site. Positions 536-555 are disordered; the sequence is PSEAFNPQSKIIEKKSLEQQ. A compositionally biased stretch (basic and acidic residues) spans 546–555; it reads IIEKKSLEQQ.

This sequence belongs to the CTP synthase family. In terms of assembly, homotetramer.

The enzyme catalyses UTP + L-glutamine + ATP + H2O = CTP + L-glutamate + ADP + phosphate + 2 H(+). The catalysed reaction is L-glutamine + H2O = L-glutamate + NH4(+). It carries out the reaction UTP + NH4(+) + ATP = CTP + ADP + phosphate + 2 H(+). The protein operates within pyrimidine metabolism; CTP biosynthesis via de novo pathway; CTP from UDP: step 2/2. Its activity is regulated as follows. Allosterically activated by GTP, when glutamine is the substrate; GTP has no effect on the reaction when ammonia is the substrate. The allosteric effector GTP functions by stabilizing the protein conformation that binds the tetrahedral intermediate(s) formed during glutamine hydrolysis. Inhibited by the product CTP, via allosteric rather than competitive inhibition. Catalyzes the ATP-dependent amination of UTP to CTP with either L-glutamine or ammonia as the source of nitrogen. Regulates intracellular CTP levels through interactions with the four ribonucleotide triphosphates. The sequence is that of CTP synthase from Prochlorococcus marinus (strain NATL1A).